A 688-amino-acid chain; its full sequence is Glycine--tRNA ligase beta subunit (688 aa).

This sequence belongs to the class-II aminoacyl-tRNA synthetase family. As to quaternary structure, tetramer of two alpha and two beta subunits.

The protein resides in the cytoplasm. It catalyses the reaction tRNA(Gly) + glycine + ATP = glycyl-tRNA(Gly) + AMP + diphosphate. In Aliivibrio fischeri (strain ATCC 700601 / ES114) (Vibrio fischeri), this protein is Glycine--tRNA ligase beta subunit.